Reading from the N-terminus, the 332-residue chain is 6-phosphogluconolactonase (332 aa).

The protein belongs to the cycloisomerase 2 family.

It carries out the reaction 6-phospho-D-glucono-1,5-lactone + H2O = 6-phospho-D-gluconate + H(+). Its pathway is carbohydrate degradation; pentose phosphate pathway; D-ribulose 5-phosphate from D-glucose 6-phosphate (oxidative stage): step 2/3. Its function is as follows. Catalyzes the hydrolysis of 6-phosphogluconolactone to 6-phosphogluconate. The sequence is that of 6-phosphogluconolactonase from Pectobacterium carotovorum subsp. carotovorum (strain PC1).